Reading from the N-terminus, the 273-residue chain is WIMGHMVNAIGQIDEFVNLGANSIETDVSFDSSANPEYTYHGIPCECGRNCKKWENFNDFLKGLRSATTPGNSKYKEKLVLVVFDLKTGSLYDNQANDAGKKLAKNLLQHYWNNGNNGGRAYIVLSIPDLNHYPLIKGFTDTLKQEGHPELLGKLGYDFSGNDAIGDVAKAYKKAGVSGHVWQSDGITNCLLRGLTRVKEAVANRDSGNGYINKVYYWTVDKRATTRDALDAGVDGIMTNYPDVITDVLNEAAYKSKFRVATYEDNPWETFKK.

The active site involves His5. Positions 25 and 27 each coordinate Mg(2+). His41 serves as the catalytic Nucleophile. Disulfide bonds link Cys45-Cys51 and Cys47-Cys190. Asp85 provides a ligand contact to Mg(2+).

This sequence belongs to the arthropod phospholipase D family. Class II subfamily. Mg(2+) is required as a cofactor. Expressed by the venom gland.

Its subcellular location is the secreted. The enzyme catalyses an N-(acyl)-sphingosylphosphocholine = an N-(acyl)-sphingosyl-1,3-cyclic phosphate + choline. The catalysed reaction is an N-(acyl)-sphingosylphosphoethanolamine = an N-(acyl)-sphingosyl-1,3-cyclic phosphate + ethanolamine. It carries out the reaction a 1-acyl-sn-glycero-3-phosphocholine = a 1-acyl-sn-glycero-2,3-cyclic phosphate + choline. It catalyses the reaction a 1-acyl-sn-glycero-3-phosphoethanolamine = a 1-acyl-sn-glycero-2,3-cyclic phosphate + ethanolamine. In terms of biological role, dermonecrotic toxins cleave the phosphodiester linkage between the phosphate and headgroup of certain phospholipids (sphingolipid and lysolipid substrates), forming an alcohol (often choline) and a cyclic phosphate. This toxin acts on sphingomyelin (SM). It may also act on ceramide phosphoethanolamine (CPE), lysophosphatidylcholine (LPC) and lysophosphatidylethanolamine (LPE), but not on lysophosphatidylserine (LPS), and lysophosphatidylglycerol (LPG). It acts by transphosphatidylation, releasing exclusively cyclic phosphate products as second products. Induces dermonecrosis, hemolysis, increased vascular permeability, edema, inflammatory response, and platelet aggregation. The protein is Dermonecrotic toxin LhSicTox-alphaIA1iv of Loxosceles hirsuta (Recluse spider).